The chain runs to 197 residues: Negative modulator of initiation of replication (197 aa).

The protein belongs to the SeqA family. Homodimer. Polymerizes to form helical filaments.

The protein resides in the cytoplasm. In terms of biological role, negative regulator of replication initiation, which contributes to regulation of DNA replication and ensures that replication initiation occurs exactly once per chromosome per cell cycle. Binds to pairs of hemimethylated GATC sequences in the oriC region, thus preventing assembly of replication proteins and re-initiation at newly replicated origins. Repression is relieved when the region becomes fully methylated. The chain is Negative modulator of initiation of replication from Pseudoalteromonas translucida (strain TAC 125).